A 434-amino-acid polypeptide reads, in one-letter code: Nicotinate phosphoribosyltransferase (434 aa).

Histidine 242 carries the phosphohistidine; by autocatalysis modification.

The protein belongs to the NAPRTase family. In terms of processing, transiently phosphorylated on a His residue during the reaction cycle. Phosphorylation strongly increases the affinity for substrates and increases the rate of nicotinate D-ribonucleotide production. Dephosphorylation regenerates the low-affinity form of the enzyme, leading to product release.

The catalysed reaction is nicotinate + 5-phospho-alpha-D-ribose 1-diphosphate + ATP + H2O = nicotinate beta-D-ribonucleotide + ADP + phosphate + diphosphate. It participates in cofactor biosynthesis; NAD(+) biosynthesis; nicotinate D-ribonucleotide from nicotinate: step 1/1. Its function is as follows. Catalyzes the synthesis of beta-nicotinate D-ribonucleotide from nicotinate and 5-phospho-D-ribose 1-phosphate at the expense of ATP. The chain is Nicotinate phosphoribosyltransferase from Agrobacterium fabrum (strain C58 / ATCC 33970) (Agrobacterium tumefaciens (strain C58)).